A 352-amino-acid polypeptide reads, in one-letter code: Iron-sulfur cluster carrier protein (352 aa).

Residue 114–121 coordinates ATP; that stretch reads GKGGVGKS.

This sequence belongs to the Mrp/NBP35 ATP-binding proteins family. As to quaternary structure, homodimer. Interacts with BrxC.

In terms of biological role, binds and transfers iron-sulfur (Fe-S) clusters to target apoproteins. Can hydrolyze ATP. Its function is as follows. Negatively regulates the expression of hpr/scoC. The effect on hpr/scoC may be indirect. In Bacillus subtilis (strain 168), this protein is Iron-sulfur cluster carrier protein (salA).